The sequence spans 400 residues: Formate-dependent phosphoribosylglycinamide formyltransferase (400 aa).

N(1)-(5-phospho-beta-D-ribosyl)glycinamide-binding positions include 22–23 (EL) and Glu82. Residues Arg115, Lys157, 162–167 (SSGKGQ), 197–200 (EGFI), and Glu205 contribute to the ATP site. The region spanning 120 to 315 (RLAAETLGLP…EFELHARAIL (196 aa)) is the ATP-grasp domain. Mg(2+) is bound by residues Glu274 and Glu286. N(1)-(5-phospho-beta-D-ribosyl)glycinamide contacts are provided by residues Asp293, Lys362, and 369 to 370 (RR).

Belongs to the PurK/PurT family. As to quaternary structure, homodimer.

The catalysed reaction is N(1)-(5-phospho-beta-D-ribosyl)glycinamide + formate + ATP = N(2)-formyl-N(1)-(5-phospho-beta-D-ribosyl)glycinamide + ADP + phosphate + H(+). It participates in purine metabolism; IMP biosynthesis via de novo pathway; N(2)-formyl-N(1)-(5-phospho-D-ribosyl)glycinamide from N(1)-(5-phospho-D-ribosyl)glycinamide (formate route): step 1/1. Functionally, involved in the de novo purine biosynthesis. Catalyzes the transfer of formate to 5-phospho-ribosyl-glycinamide (GAR), producing 5-phospho-ribosyl-N-formylglycinamide (FGAR). Formate is provided by PurU via hydrolysis of 10-formyl-tetrahydrofolate. This is Formate-dependent phosphoribosylglycinamide formyltransferase from Cupriavidus metallidurans (strain ATCC 43123 / DSM 2839 / NBRC 102507 / CH34) (Ralstonia metallidurans).